The sequence spans 238 residues: 2,3,4,5-tetrahydropyridine-2,6-dicarboxylate N-acetyltransferase (238 aa).

The protein belongs to the transferase hexapeptide repeat family. DapH subfamily.

It catalyses the reaction (S)-2,3,4,5-tetrahydrodipicolinate + acetyl-CoA + H2O = L-2-acetamido-6-oxoheptanedioate + CoA. It functions in the pathway amino-acid biosynthesis; L-lysine biosynthesis via DAP pathway; LL-2,6-diaminopimelate from (S)-tetrahydrodipicolinate (acetylase route): step 1/3. In terms of biological role, catalyzes the transfer of an acetyl group from acetyl-CoA to tetrahydrodipicolinate. This is 2,3,4,5-tetrahydropyridine-2,6-dicarboxylate N-acetyltransferase from Thermotoga neapolitana (strain ATCC 49049 / DSM 4359 / NBRC 107923 / NS-E).